A 323-amino-acid polypeptide reads, in one-letter code: Aldo-keto reductase family 1 member C3 (323 aa).

Residues 23–24 (TY) and D50 contribute to the NADP(+) site. Y55 serves as the catalytic Proton donor. Position 117 (H117) interacts with substrate. Residues 166–167 (SN), Q190, 216–222 (YSALGSQ), 270–272 (KSY), and 276–280 (RIRQN) each bind NADP(+).

Belongs to the aldo/keto reductase family. Expressed in many tissues including adrenal gland, brain, kidney, liver, lung, mammary gland, placenta, small intestine, colon, spleen, prostate and testis. High expression in prostate and mammary gland. In the prostate, higher levels in epithelial cells than in stromal cells. In the brain, expressed in medulla, spinal cord, frontotemporal lobes, thalamus, subthalamic nuclei and amygdala. Weaker expression in the hippocampus, substantia nigra and caudate.

The protein localises to the cytoplasm. It carries out the reaction a 3alpha-hydroxysteroid + NADP(+) = a 3-oxosteroid + NADPH + H(+). The enzyme catalyses a 3alpha-hydroxysteroid + NAD(+) = a 3-oxosteroid + NADH + H(+). It catalyses the reaction prostaglandin F2alpha + NADP(+) = prostaglandin D2 + NADPH + H(+). The catalysed reaction is prostaglandin F2alpha + NADP(+) = prostaglandin H2 + NADPH + H(+). It carries out the reaction prostaglandin D2 + NADPH + H(+) = 11beta-prostaglandin F2 + NADP(+). The enzyme catalyses prostaglandin D2-ethanolamide + NADPH + H(+) = 11beta-prostaglandin F2-ethanolamide + NADP(+). It catalyses the reaction testosterone + NAD(+) = androst-4-ene-3,17-dione + NADH + H(+). The catalysed reaction is testosterone + NADP(+) = androst-4-ene-3,17-dione + NADPH + H(+). It carries out the reaction 17beta-estradiol + NADP(+) = estrone + NADPH + H(+). The enzyme catalyses 17beta-estradiol + NAD(+) = estrone + NADH + H(+). It catalyses the reaction (20S)-hydroxypregn-4-en-3-one + NADP(+) = progesterone + NADPH + H(+). The catalysed reaction is (20S)-hydroxypregn-4-en-3-one + NAD(+) = progesterone + NADH + H(+). It carries out the reaction 5alpha-androstane-3alpha,17beta-diol + NADP(+) = 17beta-hydroxy-5alpha-androstan-3-one + NADPH + H(+). The enzyme catalyses 5alpha-androstane-3alpha,17beta-diol + NAD(+) = 17beta-hydroxy-5alpha-androstan-3-one + NADH + H(+). It catalyses the reaction androsterone + NADPH + H(+) = 5alpha-androstane-3alpha,17beta-diol + NADP(+). The catalysed reaction is 5alpha-androstane-3alpha,17beta-diol + NAD(+) = androsterone + NADH + H(+). It carries out the reaction 5alpha-androstane-3beta,17beta-diol + NADP(+) = 17beta-hydroxy-5alpha-androstan-3-one + NADPH + H(+). The enzyme catalyses 9-cis-retinol + NADP(+) = 9-cis-retinal + NADPH + H(+). Its pathway is steroid metabolism. With respect to regulation, strongly inhibited by nonsteroidal anti-inflammatory drugs (NSAID) including flufenamic acid and indomethacin. Also inhibited by the flavinoid, rutin, and by selective serotonin inhibitors (SSRIs). The oxidation reaction is inhibited by low micromolar concentrations of NADPH. Cytosolic aldo-keto reductase that catalyzes the NADH and NADPH-dependent reduction of ketosteroids to hydroxysteroids. Acts as a NAD(P)(H)-dependent 3-, 17- and 20-ketosteroid reductase on the steroid nucleus and side chain and regulates the metabolism of androgens, estrogens and progesterone. Displays the ability to catalyze both oxidation and reduction in vitro, but most probably acts as a reductase in vivo since the oxidase activity measured in vitro is inhibited by physiological concentration of NADPH. Acts preferentially as a 17-ketosteroid reductase and has the highest catalytic efficiency of the AKR1C enzyme for the reduction of delta4-androstenedione to form testosterone. Reduces prostaglandin (PG) D2 to 11beta-prostaglandin F2, progesterone to 20alpha-hydroxyprogesterone and estrone to 17beta-estradiol. Catalyzes the transformation of the potent androgen dihydrotestosterone (DHT) into the less active form, 5-alpha-androstan-3-alpha,17-beta-diol (3-alpha-diol). Also displays retinaldehyde reductase activity toward 9-cis-retinal. In Homo sapiens (Human), this protein is Aldo-keto reductase family 1 member C3 (AKR1C3).